The following is a 141-amino-acid chain: Large ribosomal subunit protein uL11 (141 aa).

This sequence belongs to the universal ribosomal protein uL11 family. In terms of assembly, part of the ribosomal stalk of the 50S ribosomal subunit. Interacts with L10 and the large rRNA to form the base of the stalk. L10 forms an elongated spine to which L12 dimers bind in a sequential fashion forming a multimeric L10(L12)X complex. Post-translationally, one or more lysine residues are methylated.

Its function is as follows. Forms part of the ribosomal stalk which helps the ribosome interact with GTP-bound translation factors. This is Large ribosomal subunit protein uL11 from Prochlorococcus marinus (strain NATL1A).